The following is a 210-amino-acid chain: MADS-box protein AeAP3-2 (210 aa).

Residues 1–36 (GGLLKKARELAILCDAQLGVIIFSSSGKMFEFSSPP) enclose the MADS-box domain. A K-box domain is found at 59 to 149 (NQQVYCEITR…YRVIQDHHAA (91 aa)).

Expressed exclusively in the carpel.

Its subcellular location is the nucleus. Its function is as follows. Probable transcription factor. In Asarum europaeum (Asarabacca), this protein is MADS-box protein AeAP3-2 (AP3-2).